The chain runs to 400 residues: Argininosuccinate synthase (400 aa).

ATP is bound by residues 9–17 (AYSGGVDTS) and A37. Y88 lines the L-citrulline pocket. G118 provides a ligand contact to ATP. Positions 120, 124, and 125 each coordinate L-aspartate. L-citrulline is bound at residue N124. Residues R128, S176, S185, E261, and Y273 each contribute to the L-citrulline site.

Belongs to the argininosuccinate synthase family. Type 1 subfamily. Homotetramer.

The protein resides in the cytoplasm. The enzyme catalyses L-citrulline + L-aspartate + ATP = 2-(N(omega)-L-arginino)succinate + AMP + diphosphate + H(+). It functions in the pathway amino-acid biosynthesis; L-arginine biosynthesis; L-arginine from L-ornithine and carbamoyl phosphate: step 2/3. This is Argininosuccinate synthase from Prochlorococcus marinus (strain MIT 9211).